Consider the following 287-residue polypeptide: ADP-dependent (S)-NAD(P)H-hydrate dehydratase (287 aa).

The YjeF C-terminal domain occupies 7–283; sequence TTALVKKFIP…PEISTVMKPF (277 aa). The (6S)-NADPHX site is built by Ala42 and His159. Residues 196-200 and Gly224 each bind AMP; that span reads KGSTD. Residue Asp225 participates in (6S)-NADPHX binding.

It belongs to the NnrD/CARKD family. In terms of assembly, homotetramer. It depends on Mg(2+) as a cofactor.

The enzyme catalyses (6S)-NADHX + ADP = AMP + phosphate + NADH + H(+). The catalysed reaction is (6S)-NADPHX + ADP = AMP + phosphate + NADPH + H(+). Functionally, catalyzes the dehydration of the S-form of NAD(P)HX at the expense of ADP, which is converted to AMP. Together with NAD(P)HX epimerase, which catalyzes the epimerization of the S- and R-forms, the enzyme allows the repair of both epimers of NAD(P)HX, a damaged form of NAD(P)H that is a result of enzymatic or heat-dependent hydration. This Nitrosopumilus maritimus (strain SCM1) protein is ADP-dependent (S)-NAD(P)H-hydrate dehydratase.